Reading from the N-terminus, the 95-residue chain is Aspartyl/glutamyl-tRNA(Asn/Gln) amidotransferase subunit C (95 aa).

Belongs to the GatC family. As to quaternary structure, heterotrimer of A, B and C subunits.

It catalyses the reaction L-glutamyl-tRNA(Gln) + L-glutamine + ATP + H2O = L-glutaminyl-tRNA(Gln) + L-glutamate + ADP + phosphate + H(+). The catalysed reaction is L-aspartyl-tRNA(Asn) + L-glutamine + ATP + H2O = L-asparaginyl-tRNA(Asn) + L-glutamate + ADP + phosphate + 2 H(+). Allows the formation of correctly charged Asn-tRNA(Asn) or Gln-tRNA(Gln) through the transamidation of misacylated Asp-tRNA(Asn) or Glu-tRNA(Gln) in organisms which lack either or both of asparaginyl-tRNA or glutaminyl-tRNA synthetases. The reaction takes place in the presence of glutamine and ATP through an activated phospho-Asp-tRNA(Asn) or phospho-Glu-tRNA(Gln). This is Aspartyl/glutamyl-tRNA(Asn/Gln) amidotransferase subunit C from Methylorubrum extorquens (strain CM4 / NCIMB 13688) (Methylobacterium extorquens).